The primary structure comprises 92 residues: Small ribosomal subunit protein bS20 (92 aa).

It belongs to the bacterial ribosomal protein bS20 family.

Binds directly to 16S ribosomal RNA. The sequence is that of Small ribosomal subunit protein bS20 from Magnetococcus marinus (strain ATCC BAA-1437 / JCM 17883 / MC-1).